Here is a 247-residue protein sequence, read N- to C-terminus: Ubiquinone biosynthesis O-methyltransferase (247 aa).

Arg-41, Gly-72, Asp-93, and Met-136 together coordinate S-adenosyl-L-methionine.

The protein belongs to the methyltransferase superfamily. UbiG/COQ3 family.

The enzyme catalyses a 3-demethylubiquinol + S-adenosyl-L-methionine = a ubiquinol + S-adenosyl-L-homocysteine + H(+). The catalysed reaction is a 3-(all-trans-polyprenyl)benzene-1,2-diol + S-adenosyl-L-methionine = a 2-methoxy-6-(all-trans-polyprenyl)phenol + S-adenosyl-L-homocysteine + H(+). The protein operates within cofactor biosynthesis; ubiquinone biosynthesis. Its function is as follows. O-methyltransferase that catalyzes the 2 O-methylation steps in the ubiquinone biosynthetic pathway. The sequence is that of Ubiquinone biosynthesis O-methyltransferase from Bartonella quintana (strain Toulouse) (Rochalimaea quintana).